The following is a 601-amino-acid chain: Sodium-dependent phosphate transport protein 2C (601 aa).

Residues 1–75 (MPNSLAGGQV…RRVVSSFLKA (75 aa)) lie on the Cytoplasmic side of the membrane. Ser-4 carries the post-translational modification Phosphoserine. Residues 76-96 (CGLLGSLYFFICSLDILSSAF) traverse the membrane as a helical segment. Residues 97 to 110 (QLLGSKMAGDIFKD) lie on the Extracellular side of the membrane. A helical membrane pass occupies residues 111-131 (NVVLSNPVAGLVIGVLVTVLV). At 132 to 187 (QSSSTSSSIVVSMVASKLLTVQVSVPIIMGVNVGTSITSTLVSMAQSGDRDEFQRA) the chain is on the cytoplasmic side. The helical transmembrane segment at 188-208 (FSGSAVHGIFNWLTVLVLLPL) threads the bilayer. Over 209 to 324 (ESATAALERL…FAGSKLTDLA (116 aa)) the chain is Extracellular. Residues Asn-264, Asn-267, and Asn-299 are each glycosylated (N-linked (GlcNAc...) asparagine). A disulfide bridge links Cys-275 with Cys-311. A helical transmembrane segment spans residues 325 to 345 (VGFILLAGSLLVLCVCLVLIV). Residues 346-369 (KLLNSVLKGRIAQAVKTVINADFP) lie on the Cytoplasmic side of the membrane. A helical transmembrane segment spans residues 370–390 (FPFGWLSGYLAILVGAGLTFL). The Extracellular segment spans residues 391 to 441 (LQSSSVFTAAIVPLMGVGVIDLERAYPLFLGSNIGTTTTALLAALASPADM). A helical membrane pass occupies residues 442–462 (LIFAVQVALIHFFFNLAGILL). Residues 463-487 (WYLVPVLRLPIPLAKRFGNLTAQYR) are Cytoplasmic-facing. Residues 488–508 (WVAIVYLLLTFLLLPLAAFGL) traverse the membrane as a helical segment. Residues 509–512 (SLAG) are Extracellular-facing. The chain crosses the membrane as a helical span at residues 513–533 (GTVLAAVGGPLVGLVLLIILV). The Cytoplasmic portion of the chain corresponds to 534–601 (NVLQQHRPSW…NPQVIASQQL (68 aa)).

It belongs to the SLC34A transporter family. As to expression, expressed only in the kidney.

The protein resides in the apical cell membrane. The catalysed reaction is 2 Na(+)(out) + phosphate(out) = 2 Na(+)(in) + phosphate(in). In terms of biological role, involved in actively transporting phosphate into cells via Na(+) cotransport in the renal brush border membrane. The cotransport has a Na(+):Pi stoichiometry of 2:1 and is electroneutral. This Mus musculus (Mouse) protein is Sodium-dependent phosphate transport protein 2C (Slc34a3).